We begin with the raw amino-acid sequence, 243 residues long: UDP-2,3-diacylglucosamine hydrolase (243 aa).

Mn(2+) is bound by residues Asp9, His11, Asp42, Asn79, and His114. Position 79–80 (79–80 (NR)) interacts with substrate. Asp122, Ser160, Asn164, and His195 together coordinate substrate. His195 and His197 together coordinate Mn(2+).

It belongs to the LpxH family. The cofactor is Mn(2+).

The protein resides in the cell inner membrane. The enzyme catalyses UDP-2-N,3-O-bis[(3R)-3-hydroxytetradecanoyl]-alpha-D-glucosamine + H2O = 2-N,3-O-bis[(3R)-3-hydroxytetradecanoyl]-alpha-D-glucosaminyl 1-phosphate + UMP + 2 H(+). It functions in the pathway glycolipid biosynthesis; lipid IV(A) biosynthesis; lipid IV(A) from (3R)-3-hydroxytetradecanoyl-[acyl-carrier-protein] and UDP-N-acetyl-alpha-D-glucosamine: step 4/6. Its function is as follows. Hydrolyzes the pyrophosphate bond of UDP-2,3-diacylglucosamine to yield 2,3-diacylglucosamine 1-phosphate (lipid X) and UMP by catalyzing the attack of water at the alpha-P atom. Involved in the biosynthesis of lipid A, a phosphorylated glycolipid that anchors the lipopolysaccharide to the outer membrane of the cell. The polypeptide is UDP-2,3-diacylglucosamine hydrolase (Coxiella burnetii (strain Dugway 5J108-111)).